A 172-amino-acid chain; its full sequence is Adenine phosphoribosyltransferase (172 aa).

The protein belongs to the purine/pyrimidine phosphoribosyltransferase family. In terms of assembly, homodimer.

The protein resides in the cytoplasm. It catalyses the reaction AMP + diphosphate = 5-phospho-alpha-D-ribose 1-diphosphate + adenine. The protein operates within purine metabolism; AMP biosynthesis via salvage pathway; AMP from adenine: step 1/1. In terms of biological role, catalyzes a salvage reaction resulting in the formation of AMP, that is energically less costly than de novo synthesis. In Prochlorococcus marinus (strain SARG / CCMP1375 / SS120), this protein is Adenine phosphoribosyltransferase.